The sequence spans 722 residues: MEKYKILECIGHGSFGRIYKVQRLKDGALLAQKEIHFGNITRQEKQYIADEVNILRNLKHPNIVQYCGEELNRSAQVINLYMEYCGHGDLANLIQRYKEEKKRFTEQEVLKFFTQLLLALYRCHYGENAPACDSQWPREIFHPKQSVLHRDIKPANIFLDENNSVKLGDFGLSKLLDNTRVFTQSYVGTPYYMSPEIIRSSPYSAKSDVWALGCVIFEICMLTHPFEGRSYLELQRNICQGNLSCWDHHYSDDVFLLIRHCLEVNSDLRPTTYQLLRSPILSDIRSKLESERVVLEQSDLLHKKHQMLIQLENDLQFREQRLSARESELENVIASRLAQREEILRRELEKQLRDMDARYQRHMQTVVNSMQKMRVTSPVDHNEQPESSTAEMFVDCTIEASQSPLLHIPKLGISKPLQTLSCPGFTLTTQQPILKRPTLRKELSSRALHTTATLMKYRANASSLRTTPIDKDGQITSLQQKNGTSNQVADCMNKLLHTSLDGKKLSPSELCNKFSDGEGLPNRKVSKLSVESDETAVSASSGESVPTDSTLTDTKSKSVFVHPPSPQSLYVEKLEKLNIRSDEVSKPSKASKTLHGYALPSLASPYDVHAEEKIARENEMDGNFKTMKINQHPDEYVLRTPKKIQLLEGQKRSPVKQLGRLGYNKLRRSAMDNAGLELRKAASTSNYTSLQSRTLPGSWRDDEEEIPRPFLRKMLDARMMRA.

The Protein kinase domain maps to 4–281 (YKILECIGHG…TYQLLRSPIL (278 aa)). Residues 10–18 (IGHGSFGRI) and K33 contribute to the ATP site. The active-site Proton acceptor is D151. The interval 528-557 (LSVESDETAVSASSGESVPTDSTLTDTKSK) is disordered. The segment covering 535–546 (TAVSASSGESVP) has biased composition (polar residues).

It belongs to the protein kinase superfamily. Ser/Thr protein kinase family. NIMA subfamily.

The protein localises to the cytoplasm. It localises to the cytoskeleton. The protein resides in the microtubule organizing center. Its subcellular location is the spindle pole body. It carries out the reaction L-seryl-[protein] + ATP = O-phospho-L-seryl-[protein] + ADP + H(+). It catalyses the reaction L-threonyl-[protein] + ATP = O-phospho-L-threonyl-[protein] + ADP + H(+). Its function is as follows. Promotes chromosome condensation and nuclear envelope dynamics during mitosis. Activity appears at metaphase-anaphase transition. This Schizosaccharomyces pombe (strain 972 / ATCC 24843) (Fission yeast) protein is G2-specific protein kinase fin1 (fin1).